The chain runs to 34 residues: U2-theraphotoxin-Bs1a (34 aa).

Intrachain disulfides connect Cys-2/Cys-16, Cys-9/Cys-21, and Cys-15/Cys-28.

In terms of tissue distribution, expressed by the venom gland.

The protein localises to the secreted. The polypeptide is U2-theraphotoxin-Bs1a (Brachypelma smithi (Mexican red knee tarantula)).